Consider the following 39-residue polypeptide: Decorsin (39 aa).

Residues 27 to 38 (CRFPRGDADPYC) are high affinity binding domain. The Cell attachment site signature appears at 31-33 (RGD).

It belongs to the ornatin family.

The protein resides in the secreted. Functionally, inhibits fibrinogen interaction with platelet receptors expressed on glycoprotein IIb-IIIa complex. May prevent blood from clotting during either feeding and/or storage of ingested blood. The chain is Decorsin from Macrobdella decora (North American leech).